A 123-amino-acid polypeptide reads, in one-letter code: Small ribosomal subunit protein uS12 (123 aa).

Position 89 is a 3-methylthioaspartic acid (aspartate 89). The disordered stretch occupies residues 103 to 123 (DTSGVQDRRQGRSKYGAKRPK). Basic residues predominate over residues 113 to 123 (GRSKYGAKRPK).

Belongs to the universal ribosomal protein uS12 family. As to quaternary structure, part of the 30S ribosomal subunit. Contacts proteins S8 and S17. May interact with IF1 in the 30S initiation complex.

Functionally, with S4 and S5 plays an important role in translational accuracy. Its function is as follows. Interacts with and stabilizes bases of the 16S rRNA that are involved in tRNA selection in the A site and with the mRNA backbone. Located at the interface of the 30S and 50S subunits, it traverses the body of the 30S subunit contacting proteins on the other side and probably holding the rRNA structure together. The combined cluster of proteins S8, S12 and S17 appears to hold together the shoulder and platform of the 30S subunit. In Nitratidesulfovibrio vulgaris (strain ATCC 29579 / DSM 644 / CCUG 34227 / NCIMB 8303 / VKM B-1760 / Hildenborough) (Desulfovibrio vulgaris), this protein is Small ribosomal subunit protein uS12.